Reading from the N-terminus, the 499-residue chain is Glycerol kinase (499 aa).

Position 13 (Thr-13) interacts with ADP. ATP is bound by residues Thr-13, Thr-14, and Ser-15. Residue Thr-13 participates in sn-glycerol 3-phosphate binding. Residue Arg-17 participates in ADP binding. 4 residues coordinate sn-glycerol 3-phosphate: Arg-83, Glu-84, Tyr-135, and Asp-245. Positions 83, 84, 135, 245, and 246 each coordinate glycerol. ADP-binding residues include Thr-267 and Gly-310. Positions 267, 310, 314, and 411 each coordinate ATP. ADP contacts are provided by Gly-411 and Asn-415.

The protein belongs to the FGGY kinase family.

The enzyme catalyses glycerol + ATP = sn-glycerol 3-phosphate + ADP + H(+). It functions in the pathway polyol metabolism; glycerol degradation via glycerol kinase pathway; sn-glycerol 3-phosphate from glycerol: step 1/1. Its activity is regulated as follows. Inhibited by fructose 1,6-bisphosphate (FBP). Key enzyme in the regulation of glycerol uptake and metabolism. Catalyzes the phosphorylation of glycerol to yield sn-glycerol 3-phosphate. The chain is Glycerol kinase from Xanthomonas campestris pv. campestris (strain 8004).